The chain runs to 289 residues: Acetyl-coenzyme A carboxylase carboxyl transferase subunit beta (289 aa).

Residues 34-289 (MWVKCNKCGE…KLINMHQNSF (256 aa)) enclose the CoA carboxyltransferase N-terminal domain. Cys38, Cys41, Cys57, and Cys60 together coordinate Zn(2+). The C4-type zinc finger occupies 38–60 (CNKCGEILYQNDLEKNYMVCNLC).

The protein belongs to the AccD/PCCB family. In terms of assembly, acetyl-CoA carboxylase is a heterohexamer composed of biotin carboxyl carrier protein (AccB), biotin carboxylase (AccC) and two subunits each of ACCase subunit alpha (AccA) and ACCase subunit beta (AccD). It depends on Zn(2+) as a cofactor.

It is found in the cytoplasm. It catalyses the reaction N(6)-carboxybiotinyl-L-lysyl-[protein] + acetyl-CoA = N(6)-biotinyl-L-lysyl-[protein] + malonyl-CoA. It functions in the pathway lipid metabolism; malonyl-CoA biosynthesis; malonyl-CoA from acetyl-CoA: step 1/1. Its function is as follows. Component of the acetyl coenzyme A carboxylase (ACC) complex. Biotin carboxylase (BC) catalyzes the carboxylation of biotin on its carrier protein (BCCP) and then the CO(2) group is transferred by the transcarboxylase to acetyl-CoA to form malonyl-CoA. The chain is Acetyl-coenzyme A carboxylase carboxyl transferase subunit beta from Clostridium botulinum (strain ATCC 19397 / Type A).